Consider the following 453-residue polypeptide: Kynurenine 3-monooxygenase (453 aa).

It belongs to the aromatic-ring hydroxylase family. KMO subfamily. FAD is required as a cofactor.

The catalysed reaction is L-kynurenine + NADPH + O2 + H(+) = 3-hydroxy-L-kynurenine + NADP(+) + H2O. It participates in cofactor biosynthesis; NAD(+) biosynthesis; quinolinate from L-kynurenine: step 1/3. Its function is as follows. Catalyzes the hydroxylation of L-kynurenine (L-Kyn) to form 3-hydroxy-L-kynurenine (L-3OHKyn). Required for synthesis of quinolinic acid. The polypeptide is Kynurenine 3-monooxygenase (Salinispora tropica (strain ATCC BAA-916 / DSM 44818 / JCM 13857 / NBRC 105044 / CNB-440)).